Consider the following 252-residue polypeptide: Probable transcriptional regulatory protein DSY2470 (252 aa).

It belongs to the TACO1 family.

The protein localises to the cytoplasm. In Desulfitobacterium hafniense (strain Y51), this protein is Probable transcriptional regulatory protein DSY2470.